A 177-amino-acid chain; its full sequence is Large ribosomal subunit protein uL6 (177 aa).

A disordered region spans residues 151–177 (LRPPEPYKGKGVRYAGENVRRKEGKKK).

Belongs to the universal ribosomal protein uL6 family. Part of the 50S ribosomal subunit.

Its function is as follows. This protein binds to the 23S rRNA, and is important in its secondary structure. It is located near the subunit interface in the base of the L7/L12 stalk, and near the tRNA binding site of the peptidyltransferase center. The polypeptide is Large ribosomal subunit protein uL6 (Phenylobacterium zucineum (strain HLK1)).